Here is a 430-residue protein sequence, read N- to C-terminus: Enolase (430 aa).

Gln-164 is a binding site for (2R)-2-phosphoglycerate. Glu-208 acts as the Proton donor in catalysis. Asp-245, Glu-288, and Asp-315 together coordinate Mg(2+). (2R)-2-phosphoglycerate-binding residues include Lys-340, Arg-369, Ser-370, and Lys-391. The active-site Proton acceptor is the Lys-340.

This sequence belongs to the enolase family. Mg(2+) is required as a cofactor.

Its subcellular location is the cytoplasm. It localises to the secreted. The protein resides in the cell surface. The catalysed reaction is (2R)-2-phosphoglycerate = phosphoenolpyruvate + H2O. Its pathway is carbohydrate degradation; glycolysis; pyruvate from D-glyceraldehyde 3-phosphate: step 4/5. Catalyzes the reversible conversion of 2-phosphoglycerate (2-PG) into phosphoenolpyruvate (PEP). It is essential for the degradation of carbohydrates via glycolysis. The sequence is that of Enolase from Thermococcus kodakarensis (strain ATCC BAA-918 / JCM 12380 / KOD1) (Pyrococcus kodakaraensis (strain KOD1)).